Reading from the N-terminus, the 298-residue chain is Mimecan (298 aa).

The signal sequence occupies residues 1–20 (MKTLQSTLLLLLFVPLIKPA). Asn88 carries an N-linked (GlcNAc...) (keratan sulfate) asparagine glycan. 7 LRR repeats span residues 112–131 (DAVP…FNKI), 132–155 (KKLT…GNLI), 156–179 (EDIE…ENQL), 180–199 (LKLP…YNKI), 200–225 (KSRG…HNAL), 226–246 (ESVP…FNNI), and 247–277 (ASIT…GNPI). N-linked (GlcNAc...) (keratan sulfate) asparagine glycosylation occurs at Asn214. Cys255 and Cys288 are joined by a disulfide. N-linked (GlcNAc...) (keratan sulfate) asparagine glycosylation occurs at Asn258.

It belongs to the small leucine-rich proteoglycan (SLRP) family. SLRP class III subfamily. Post-translationally, contains keratan sulfate.

The protein resides in the secreted. It localises to the extracellular space. It is found in the extracellular matrix. Induces bone formation in conjunction with TGF-beta-1 or TGF-beta-2. In Pongo abelii (Sumatran orangutan), this protein is Mimecan (OGN).